The chain runs to 332 residues: Glucokinase (332 aa).

15–20 (ADIGGT) lines the ATP pocket.

The protein belongs to the bacterial glucokinase family.

It localises to the cytoplasm. It carries out the reaction D-glucose + ATP = D-glucose 6-phosphate + ADP + H(+). The protein is Glucokinase of Campylobacter jejuni subsp. doylei (strain ATCC BAA-1458 / RM4099 / 269.97).